A 98-amino-acid chain; its full sequence is DNA-binding protein Fis (98 aa).

The H-T-H motif DNA-binding region spans 74–93 (QTRAAQMMGINRGTLRKKLK).

This sequence belongs to the transcriptional regulatory Fis family. Homodimer.

Functionally, activates ribosomal RNA transcription. Plays a direct role in upstream activation of rRNA promoters. This is DNA-binding protein Fis from Sodalis glossinidius (strain morsitans).